The sequence spans 103 residues: ATP synthase F(0) complex subunit g, mitochondrial (103 aa).

Position 2 is an N-acetylalanine (alanine 2). N6-acetyllysine occurs at positions 11, 24, 35, and 54.

This sequence belongs to the ATPase g subunit family. In terms of assembly, component of the ATP synthase complex composed at least of ATP5F1A/subunit alpha, ATP5F1B/subunit beta, ATP5MC1/subunit c (homooctomer), MT-ATP6/subunit a, MT-ATP8/subunit 8, ATP5ME/subunit e, ATP5MF/subunit f, ATP5MG/subunit g, ATP5MK/subunit k, ATP5MJ/subunit j, ATP5F1C/subunit gamma, ATP5F1D/subunit delta, ATP5F1E/subunit epsilon, ATP5PF/subunit F6, ATP5PB/subunit b, ATP5PD/subunit d, ATP5PO/subunit OSCP. ATP synthase complex consists of a soluble F(1) head domain (subunits alpha(3) and beta(3)) - the catalytic core - and a membrane F(0) domain - the membrane proton channel (subunits c, a, 8, e, f, g, k and j). These two domains are linked by a central stalk (subunits gamma, delta, and epsilon) rotating inside the F1 region and a stationary peripheral stalk (subunits F6, b, d, and OSCP).

The protein localises to the mitochondrion. It is found in the mitochondrion inner membrane. Functionally, subunit g, of the mitochondrial membrane ATP synthase complex (F(1)F(0) ATP synthase or Complex V) that produces ATP from ADP in the presence of a proton gradient across the membrane which is generated by electron transport complexes of the respiratory chain. ATP synthase complex consist of a soluble F(1) head domain - the catalytic core - and a membrane F(1) domain - the membrane proton channel. These two domains are linked by a central stalk rotating inside the F(1) region and a stationary peripheral stalk. During catalysis, ATP synthesis in the catalytic domain of F(1) is coupled via a rotary mechanism of the central stalk subunits to proton translocation. In vivo, can only synthesize ATP although its ATP hydrolase activity can be activated artificially in vitro. Part of the complex F(0) domain. In Mus musculus (Mouse), this protein is ATP synthase F(0) complex subunit g, mitochondrial.